Consider the following 273-residue polypeptide: Undecaprenyl-diphosphatase (273 aa).

7 consecutive transmembrane segments (helical) span residues 39–59, 86–106, 117–137, 146–166, 189–209, 220–240, and 249–269; these read SGLTFDVALHLGTFLALVVYF, LPFLVIASAVPAALVGKLFET, LLIGLFLILFGVGLGLADLFG, VTVSHALVIGLFQCLALIPGV, FSFLMSLPIVAGAALFKMLHL, LPLAAGIVSSAVTGYISVAFL, and IAPFVWYRLIAGGAVVSVILT.

It belongs to the UppP family.

Its subcellular location is the cell inner membrane. The catalysed reaction is di-trans,octa-cis-undecaprenyl diphosphate + H2O = di-trans,octa-cis-undecaprenyl phosphate + phosphate + H(+). Functionally, catalyzes the dephosphorylation of undecaprenyl diphosphate (UPP). Confers resistance to bacitracin. The polypeptide is Undecaprenyl-diphosphatase (Pelobacter propionicus (strain DSM 2379 / NBRC 103807 / OttBd1)).